A 295-amino-acid polypeptide reads, in one-letter code: MSDALNMTLDEIVKKSKSERSAAARSGGKGVSRKSGRGRGGPNGVVGGGRGGGPVRRGPLAVNTRPSSSFSINKLARRKRSLPWQNQNDLYEETLRAVGVSGVEVGTTVYITNLDQGVTNEDIRELYAEIGELKRYAIHYDKNGRPSGSAEVVYMRRSDAIQAMRKYNNVLLDGRPMKLEILGGNTESAPVAARVNVTGLNGRMKRSVFIGQGVRGGRVGRGRGSGPSGRRLPLQQNQQGGVTAGRGGFRGRGRGNGGGRGNKSGGRGGKKPVEKSAADLDKDLESYHAEAMNIS.

The disordered stretch occupies residues 1 to 67; the sequence is MSDALNMTLD…GPLAVNTRPS (67 aa). Residue Ser2 is modified to N-acetylserine. Over residues 11–22 the composition is skewed to basic and acidic residues; that stretch reads EIVKKSKSERSA. Residues 38–55 are compositionally biased toward gly residues; that stretch reads GRGGPNGVVGGGRGGGPV. Positions 107 to 184 constitute an RRM domain; it reads TTVYITNLDQ…RPMKLEILGG (78 aa). The segment at 212-295 is disordered; sequence QGVRGGRVGR…SYHAEAMNIS (84 aa). Composition is skewed to gly residues over residues 213–227 and 242–267; these read GVRG…GSGP and VTAG…SGGR. Basic and acidic residues predominate over residues 271–288; sequence KPVEKSAADLDKDLESYH.

It belongs to the ALYREF family. Interacts with PARP1.

Its subcellular location is the nucleus. It localises to the nucleoplasm. The protein resides in the nucleolus. Its function is as follows. Export adapter involved in nuclear export of spliced and unspliced mRNA. This Arabidopsis thaliana (Mouse-ear cress) protein is THO complex subunit 4C.